A 1080-amino-acid polypeptide reads, in one-letter code: Phycobiliprotein ApcE (1080 aa).

The interval 18-76 (QTLAVATITQAEQQDRFLGTGELNELATYFASGAKRLEIAQTLTENSEIIVSRAANRIF) is phycobilin-like 1. Residues 77–144 (VGGSPMSFLE…GPTPPGFRPI (68 aa)) form a phycobilin-like loop region. Residues 145 to 237 (NVARYGPSNM…YMDVLLTEFK (93 aa)) form a phycobilin-like 2 region. Cysteine 195 serves as a coordination point for (2R,3E)-phycocyanobilin. PBS-linker domains lie at 252–432 (DQQG…FRKV), 514–693 (LGPK…QKQE), 710–888 (PDIQ…KQND), and 922–1080 (STSA…SLGN). Positions 906–930 (GTSSSGRNGFTDLGRSSTSAQGQLG) are disordered.

This sequence belongs to the phycobilisome linker protein family. As to quaternary structure, phycobilisomes of this organism are composed of a two cylinder core, from which six rods radiate. The core is mainly composed of allophycocyanin alpha and beta chains, and of three minor components: the allophycocyanin alpha-B chain, a 18.3 kDa polypeptide, and the anchor polypeptide L-CM. Post-translationally, contains one covalently linked bilin chromophore. This protein autochromophorylates.

It is found in the cellular thylakoid membrane. Its function is as follows. This protein is postulated to act both as terminal energy acceptor (by its phycobilin-like domains) and as a linker polypeptide (by its repeats and arms) that stabilizes the phycobilisome core architecture. In terms of biological role, has intrinsic bilin lyase activity. The sequence is that of Phycobiliprotein ApcE (apcE) from Microchaete diplosiphon (Fremyella diplosiphon).